We begin with the raw amino-acid sequence, 841 residues long: MESGPRAELGAGAPPAVVARTPPEPRPSPEGDPSPPPPPMSALVPDTPPDTPPAMKNATSSKQLPLEPESPSGQVGPRPAPPQEESPSSEAKSRGPTPPAMGPRDARPPRRSSQPSPTAVPASDSPPTKQEVKKAGERHKLAKERREERAKYLAAKKAVWLEKEEKAKALREKQLQERRRRLEEQRLKAEQRRAALEERQRQKLEKNKERYEAAIQRSVKKTWAEIRQQRWSWAGALHHSSPGHKTSGSRCSVSAVNLPKHVDSIINKRLSKSSATLWNSPSRNRSLQLSAWESSIVDRLMTPTLSFLARSRSAVTLPRNGRDQGRGCDPGRGPTWGRAGASLARGPQPDRTHPSAAVPVCPRSASASPLTPCSVTRSVHRCAPAGERGERRKPNAGGSPAPVRRRPEASPVQKKEKKDKERENEKEKSALARERSLKKRQSLPASPRARLSASTASELSPKSKARPSSPSTSWHRPASPCPSPGPGHTLPPKPPSPRGTTASPKGRVRRKEEAKESPSAAGPEDKSQSKRRASNEKESAAPASPAPSPAPSPTPAPPQKEQPPAETPTDAAVLTSPPAPAPPVTPSKPMAGTTDREEATRLLAEKRRQAREQREREEQERRLQAERDKRMREEQLAREAEARAEREAEARRREEQEAREKAQAEQEEQERLQKQKEEAEARSREEAERQRLEREKHFQQQEQERQERRKRLEEIMKRTRKSEVSETKQKQDSKEANANGSSPEPVKAVEARSPGLQKEAVQKEEPIPQEPQWSLPSKELPASLVNGLQPLPAHQENGFSTNGPSGDKSLSRTPETLLPFAEAEAFLKKAVVQSPQVTEVL.

Disordered regions lie at residues 1-151 (MESG…ERAK) and 184-208 (EQRL…EKNK). Over residues 22-52 (PPEPRPSPEGDPSPPPPPMSALVPDTPPDTP) the composition is skewed to pro residues. Thr-47 and Thr-51 each carry phosphothreonine. A phosphoserine mark is found at Ser-70, Ser-86, and Ser-93. Position 97 is a phosphothreonine (Thr-97). A phosphoserine mark is found at Ser-113 and Ser-116. Thr-118 carries the post-translational modification Phosphothreonine. 2 positions are modified to phosphoserine: Ser-123 and Ser-125. A coiled-coil region spans residues 128–222 (TKQEVKKAGE…AAIQRSVKKT (95 aa)). Positions 130 to 151 (QEVKKAGERHKLAKERREERAK) are enriched in basic and acidic residues. Residues Ser-254, Ser-273, Ser-313, Ser-366, and Ser-399 each carry the phosphoserine modification. The interval 316-813 (TLPRNGRDQG…PSGDKSLSRT (498 aa)) is disordered. Polar residues predominate over residues 365–377 (ASASPLTPCSVTR). Basic and acidic residues predominate over residues 405–435 (RRPEASPVQKKEKKDKERENEKEKSALARER). The stretch at 412–441 (VQKKEKKDKERENEKEKSALARERSLKKRQ) forms a coiled coil. Ser-442, Ser-446, Ser-452, Ser-454, and Ser-460 each carry phosphoserine. The segment covering 460–473 (SPKSKARPSSPSTS) has biased composition (low complexity). A Glycyl lysine isopeptide (Lys-Gly) (interchain with G-Cter in SUMO2) cross-link involves residue Lys-462. 2 positions are modified to phosphoserine: Ser-479 and Ser-496. Residues 479-497 (SPCPSPGPGHTLPPKPPSP) are compositionally biased toward pro residues. Residues 523–539 (PEDKSQSKRRASNEKES) are compositionally biased toward basic and acidic residues. A phosphoserine mark is found at Ser-544, Ser-548, and Ser-552. Residues 544–561 (SPAPSPAPSPTPAPPQKE) show a composition bias toward pro residues. At Thr-554 the chain carries Phosphothreonine. Residues 562–576 (QPPAETPTDAAVLTS) are compositionally biased toward low complexity. Over residues 577 to 586 (PPAPAPPVTP) the composition is skewed to pro residues. A coiled-coil region spans residues 593–721 (TTDREEATRL…LEEIMKRTRK (129 aa)). A compositionally biased stretch (basic and acidic residues) spans 594-735 (TDREEATRLL…ETKQKQDSKE (142 aa)). 2 positions are modified to phosphoserine: Ser-742 and Ser-753. Phosphothreonine occurs at positions 813 and 816. Ser-834 is subject to Phosphoserine.

The protein belongs to the MAP7 family.

The protein localises to the cytoplasm. It is found in the cytoskeleton. It localises to the spindle. Its subcellular location is the microtubule organizing center. The protein resides in the centrosome. The protein localises to the midbody. In terms of biological role, microtubule-stabilizing protein involved in the control of cell motility and neurite outgrowth. Facilitate microtubule stabilization through the maintenance of acetylated stable microtubules. This chain is MAP7 domain-containing protein 1 (MAP7D1), found in Homo sapiens (Human).